The sequence spans 285 residues: Bifunctional protein FolD (285 aa).

NADP(+) contacts are provided by residues 165-167 and serine 190; that span reads GRS.

It belongs to the tetrahydrofolate dehydrogenase/cyclohydrolase family. Homodimer.

The enzyme catalyses (6R)-5,10-methylene-5,6,7,8-tetrahydrofolate + NADP(+) = (6R)-5,10-methenyltetrahydrofolate + NADPH. It carries out the reaction (6R)-5,10-methenyltetrahydrofolate + H2O = (6R)-10-formyltetrahydrofolate + H(+). It participates in one-carbon metabolism; tetrahydrofolate interconversion. Catalyzes the oxidation of 5,10-methylenetetrahydrofolate to 5,10-methenyltetrahydrofolate and then the hydrolysis of 5,10-methenyltetrahydrofolate to 10-formyltetrahydrofolate. This is Bifunctional protein FolD from Burkholderia orbicola (strain AU 1054).